A 113-amino-acid chain; its full sequence is U11-theraphotoxin-Hhn1a (113 aa).

The signal sequence occupies residues 1 to 21; the sequence is MNTVRVTFLLVFVLAVSLGQA. Residues 22–74 constitute a propeptide that is removed on maturation; sequence DKDENRMEMQEKTEQGKSYLDFAENLLLQKLEELEAKLLEEDSEESRNSRQRR. Residues 61-83 are disordered; that stretch reads EEDSEESRNSRQRRCIGEGVPCD. 3 disulfides stabilise this stretch: C75/C90, C82/C95, and C89/C110.

The protein belongs to the neurotoxin 14 (magi-1) family. 01 (HNTX-16) subfamily. Expressed by the venom gland.

Its subcellular location is the secreted. Functionally, probable ion channel inhibitor. The polypeptide is U11-theraphotoxin-Hhn1a (Cyriopagopus hainanus (Chinese bird spider)).